Here is a 358-residue protein sequence, read N- to C-terminus: Biotin synthase (358 aa).

A Radical SAM core domain is found at 44–272 (NRVRLNYLVN…DSEVRAAAGR (229 aa)). The [4Fe-4S] cluster site is built by cysteine 59, cysteine 63, and cysteine 66. [2Fe-2S] cluster is bound by residues cysteine 103, cysteine 136, cysteine 196, and arginine 267.

This sequence belongs to the radical SAM superfamily. Biotin synthase family. In terms of assembly, homodimer. The cofactor is [4Fe-4S] cluster. [2Fe-2S] cluster serves as cofactor.

The enzyme catalyses (4R,5S)-dethiobiotin + (sulfur carrier)-SH + 2 reduced [2Fe-2S]-[ferredoxin] + 2 S-adenosyl-L-methionine = (sulfur carrier)-H + biotin + 2 5'-deoxyadenosine + 2 L-methionine + 2 oxidized [2Fe-2S]-[ferredoxin]. It functions in the pathway cofactor biosynthesis; biotin biosynthesis; biotin from 7,8-diaminononanoate: step 2/2. Its function is as follows. Catalyzes the conversion of dethiobiotin (DTB) to biotin by the insertion of a sulfur atom into dethiobiotin via a radical-based mechanism. The chain is Biotin synthase from Cutibacterium acnes (strain DSM 16379 / KPA171202) (Propionibacterium acnes).